The primary structure comprises 206 residues: GTP-binding protein Rho3 (206 aa).

Residue 24–31 (GDGACGKT) participates in GTP binding. An Effector region motif is present at residues 46 to 54 (YEPTVFENY). GTP contacts are provided by residues 71–75 (DTAGQ) and 129–132 (SKCD). A Cysteine methyl ester modification is found at Cys-203. A lipid anchor (S-geranylgeranyl cysteine) is attached at Cys-203. Positions 204-206 (CVM) are cleaved as a propeptide — removed in mature form.

The protein belongs to the small GTPase superfamily. Rho family.

It is found in the cell membrane. This chain is GTP-binding protein Rho3 (RHO3), found in Schizophyllum commune (Split gill fungus).